The primary structure comprises 549 residues: RNA-induced transcriptional silencing complex protein tas3 (549 aa).

Disordered stretches follow at residues 89-111 (KNSPAKAKATHTSSGVTKEVRAS), 126-184 (DGKE…SDSI), 202-225 (IRSSDSKSVGWDDNSTGFRESSKS), 298-361 (LDNF…HLEK), and 381-430 (AHFH…PLAS). Polar residues predominate over residues 298 to 307 (LDNFNRPSQQ). 2 stretches are compositionally biased toward basic and acidic residues: residues 328–361 (YDSYHPDSRSDSYRSKREHYDNRDTGPRSKHLEK) and 403–416 (SDRQRESRENELPT). Residues 419–430 (LNASDSHNPLAS) show a composition bias toward polar residues.

Ago1, chp1 and tas3 interact to form the core of the RNA-induced transcriptional silencing (RITS) complex. The RITS complex interacts with the RDRC complex via interaction between ago1 and hrr1. Clr4 has a role in mediating this interaction.

It localises to the nucleus. Its subcellular location is the cytoplasm. It is found in the cytoskeleton. The protein localises to the microtubule organizing center. The protein resides in the spindle pole body. In terms of biological role, has a role in the RNA interference (RNAi) pathway which is important for heterochromatin formation and accurate chromosome segregation. A member of the RNA-induced transcriptional silencing (RITS) complex which is involved in the biosynthesis of dsRNA from primer siRNAs provided by the RNA-directed RNA polymerase (RDRC) complex. The chain is RNA-induced transcriptional silencing complex protein tas3 (tas3) from Schizosaccharomyces pombe (strain 972 / ATCC 24843) (Fission yeast).